A 372-amino-acid polypeptide reads, in one-letter code: Queuine tRNA-ribosyltransferase (372 aa).

The active-site Proton acceptor is the aspartate 89. Substrate is bound by residues 89–93 (DSGGF), aspartate 161, and glycine 232. Residues 262–268 (GIGDLPS) form an RNA binding region. Residue aspartate 281 is the Nucleophile of the active site. The tract at residues 286–290 (TKAAR) is RNA binding; important for wobble base 34 recognition. 4 residues coordinate Zn(2+): cysteine 319, cysteine 321, cysteine 324, and histidine 351.

Belongs to the queuine tRNA-ribosyltransferase family. Homodimer. Within each dimer, one monomer is responsible for RNA recognition and catalysis, while the other monomer binds to the replacement base PreQ1. It depends on Zn(2+) as a cofactor.

The catalysed reaction is 7-aminomethyl-7-carbaguanine + guanosine(34) in tRNA = 7-aminomethyl-7-carbaguanosine(34) in tRNA + guanine. It functions in the pathway tRNA modification; tRNA-queuosine biosynthesis. Its function is as follows. Catalyzes the base-exchange of a guanine (G) residue with the queuine precursor 7-aminomethyl-7-deazaguanine (PreQ1) at position 34 (anticodon wobble position) in tRNAs with GU(N) anticodons (tRNA-Asp, -Asn, -His and -Tyr). Catalysis occurs through a double-displacement mechanism. The nucleophile active site attacks the C1' of nucleotide 34 to detach the guanine base from the RNA, forming a covalent enzyme-RNA intermediate. The proton acceptor active site deprotonates the incoming PreQ1, allowing a nucleophilic attack on the C1' of the ribose to form the product. After dissociation, two additional enzymatic reactions on the tRNA convert PreQ1 to queuine (Q), resulting in the hypermodified nucleoside queuosine (7-(((4,5-cis-dihydroxy-2-cyclopenten-1-yl)amino)methyl)-7-deazaguanosine). This Chlamydia trachomatis serovar A (strain ATCC VR-571B / DSM 19440 / HAR-13) protein is Queuine tRNA-ribosyltransferase.